The chain runs to 31 residues: Photosystem I reaction center subunit XII (31 aa).

The helical transmembrane segment at 7–26 (QVYIALLTALIPAFFALKLG) threads the bilayer.

The protein belongs to the PsaM family.

The protein resides in the plastid. It is found in the chloroplast thylakoid membrane. In Euglena viridis (Cercaria viridis), this protein is Photosystem I reaction center subunit XII.